The chain runs to 324 residues: tRNA U34 carboxymethyltransferase (324 aa).

Carboxy-S-adenosyl-L-methionine is bound by residues lysine 92, tryptophan 106, lysine 111, glycine 131, 181 to 182, methionine 197, tyrosine 201, and arginine 316; that span reads LE.

The protein belongs to the class I-like SAM-binding methyltransferase superfamily. CmoB family. As to quaternary structure, homotetramer.

The enzyme catalyses carboxy-S-adenosyl-L-methionine + 5-hydroxyuridine(34) in tRNA = 5-carboxymethoxyuridine(34) in tRNA + S-adenosyl-L-homocysteine + H(+). Catalyzes carboxymethyl transfer from carboxy-S-adenosyl-L-methionine (Cx-SAM) to 5-hydroxyuridine (ho5U) to form 5-carboxymethoxyuridine (cmo5U) at position 34 in tRNAs. This chain is tRNA U34 carboxymethyltransferase, found in Syntrophotalea carbinolica (strain DSM 2380 / NBRC 103641 / GraBd1) (Pelobacter carbinolicus).